The following is a 95-amino-acid chain: Large ribosomal subunit protein bL25 (95 aa).

This sequence belongs to the bacterial ribosomal protein bL25 family. As to quaternary structure, part of the 50S ribosomal subunit; part of the 5S rRNA/L5/L18/L25 subcomplex. Contacts the 5S rRNA. Binds to the 5S rRNA independently of L5 and L18.

In terms of biological role, this is one of the proteins that binds to the 5S RNA in the ribosome where it forms part of the central protuberance. The polypeptide is Large ribosomal subunit protein bL25 (Haemophilus influenzae (strain 86-028NP)).